A 100-amino-acid polypeptide reads, in one-letter code: NADH-quinone oxidoreductase subunit K (100 aa).

The next 3 helical transmembrane spans lie at 2–22, 28–48, and 60–80; these read IPLQHGLILAAILFVLGLTGV, LLFMLIGLEIMINAAALAFVV, and VMFILAISLAAAEASIGLALL.

Belongs to the complex I subunit 4L family. In terms of assembly, NDH-1 is composed of 13 different subunits. Subunits NuoA, H, J, K, L, M, N constitute the membrane sector of the complex.

It is found in the cell inner membrane. It catalyses the reaction a quinone + NADH + 5 H(+)(in) = a quinol + NAD(+) + 4 H(+)(out). Its function is as follows. NDH-1 shuttles electrons from NADH, via FMN and iron-sulfur (Fe-S) centers, to quinones in the respiratory chain. The immediate electron acceptor for the enzyme in this species is believed to be ubiquinone. Couples the redox reaction to proton translocation (for every two electrons transferred, four hydrogen ions are translocated across the cytoplasmic membrane), and thus conserves the redox energy in a proton gradient. The sequence is that of NADH-quinone oxidoreductase subunit K from Erwinia tasmaniensis (strain DSM 17950 / CFBP 7177 / CIP 109463 / NCPPB 4357 / Et1/99).